We begin with the raw amino-acid sequence, 108 residues long: Small ribosomal subunit protein bS18 (108 aa).

The span at 1-12 (MSDITKQPANNI) shows a compositional bias: polar residues. A disordered region spans residues 1–33 (MSDITKQPANNISSDDKKEVAKASAKSSVEGAK).

Belongs to the bacterial ribosomal protein bS18 family. As to quaternary structure, part of the 30S ribosomal subunit. Forms a tight heterodimer with protein bS6.

Binds as a heterodimer with protein bS6 to the central domain of the 16S rRNA, where it helps stabilize the platform of the 30S subunit. The polypeptide is Small ribosomal subunit protein bS18 (Mycoplasmoides gallisepticum (strain R(low / passage 15 / clone 2)) (Mycoplasma gallisepticum)).